The chain runs to 436 residues: GTPase Der (436 aa).

EngA-type G domains are found at residues 4–167 (PVVA…PKDH) and 176–351 (IKFC…DNHA). Residues 10–17 (GRPNVGKS), 57–61 (DTGGI), 119–122 (NKID), 182–189 (GRPNVGKS), 229–233 (DTAGM), and 294–297 (NKWD) contribute to the GTP site. In terms of domain architecture, KH-like spans 352–436 (MRVQTNVLNE…PIKIIARPRK (85 aa)).

Belongs to the TRAFAC class TrmE-Era-EngA-EngB-Septin-like GTPase superfamily. EngA (Der) GTPase family. As to quaternary structure, associates with the 50S ribosomal subunit.

Its function is as follows. GTPase that plays an essential role in the late steps of ribosome biogenesis. This Geobacillus thermodenitrificans (strain NG80-2) protein is GTPase Der.